The primary structure comprises 353 residues: Heterogeneous nuclear ribonucleoprotein D0 (353 aa).

The disordered stretch occupies residues 1–89; the sequence is MSEEQFGGDG…SSPRHTEAAT (89 aa). N-acetylserine is present on serine 2. Residues 11 to 42 show a composition bias toward low complexity; sequence AAAAATAAVGGSAGEQEGAMVAAAQGAAAAAG. A compositionally biased stretch (gly residues) spans 43-56; that stretch reads SGSGGGSAPGGTEG. Basic and acidic residues predominate over residues 62–71; it reads EGAKIDASKN. Serine 69 is modified (phosphoserine). A Glycyl lysine isopeptide (Lys-Gly) (interchain with G-Cter in SUMO2) cross-link involves residue lysine 70. Serine 78, serine 80, and serine 81 each carry phosphoserine. Threonine 89 bears the Phosphothreonine mark. RRM domains follow at residues 95-177 and 180-259; these read WKMF…KTKE and KKIF…MSKE. Lysine 117 carries the post-translational modification N6-methyllysine. At threonine 125 the chain carries Phosphothreonine. Lysine 127 participates in a covalent cross-link: Glycyl lysine isopeptide (Lys-Gly) (interchain with G-Cter in SUMO2). Residue lysine 163 is modified to N6-acetyllysine. Serine 188 is subject to Phosphoserine. Threonine 191 carries the post-translational modification Phosphothreonine. Lysine 195 is covalently cross-linked (Glycyl lysine isopeptide (Lys-Gly) (interchain with G-Cter in SUMO2)). Residues lysine 241 and lysine 249 each carry the N6-acetyllysine modification. Serine 269 bears the Phosphoserine mark. An omega-N-methylarginine mark is found at arginine 270, arginine 276, arginine 278, and arginine 280. Arginine 343 carries the asymmetric dimethylarginine; alternate modification. Arginine 343 bears the Dimethylated arginine; alternate mark. Arginine 343 carries the post-translational modification Omega-N-methylarginine; alternate.

In terms of assembly, identified in a IGF2BP1-dependent mRNP granule complex containing untranslated mRNAs. Part of a complex associated with the FOS mCRD domain and consisting of PABPC1, PAIP1, CSDE1/UNR and SYNCRIP. Interacts with IGF2BP2. Interacts with GTPBP1. Interacts with EIF4G1; the interaction requires RNA. Interacts with EIF3B and RPS3. Post-translationally, methylated by PRMT1, in an insulin-dependent manner. The PRMT1-mediated methylation regulates its phosphorylation. Arg-343 is dimethylated, probably to asymmetric dimethylarginine.

Its subcellular location is the nucleus. The protein localises to the cytoplasm. Its function is as follows. Binds with high affinity to RNA molecules that contain AU-rich elements (AREs) found within the 3'-UTR of many proto-oncogenes and cytokine mRNAs. Also binds to double- and single-stranded DNA sequences in a specific manner and functions a transcription factor. Each of the RNA-binding domains specifically can bind solely to a single-stranded non-monotonous 5'-UUAG-3' sequence and also weaker to the single-stranded 5'-TTAGGG-3' telomeric DNA repeat. Binds RNA oligonucleotides with 5'-UUAGGG-3' repeats more tightly than the telomeric single-stranded DNA 5'-TTAGGG-3' repeats. Binding of RRM1 to DNA inhibits the formation of DNA quadruplex structure which may play a role in telomere elongation. May be involved in translationally coupled mRNA turnover. Implicated with other RNA-binding proteins in the cytoplasmic deadenylation/translational and decay interplay of the FOS mRNA mediated by the major coding-region determinant of instability (mCRD) domain. May play a role in the regulation of the rhythmic expression of circadian clock core genes. Directly binds to the 3'UTR of CRY1 mRNA and induces CRY1 rhythmic translation. May also be involved in the regulation of PER2 translation. The protein is Heterogeneous nuclear ribonucleoprotein D0 (Hnrnpd) of Rattus norvegicus (Rat).